The chain runs to 1834 residues: Non-reducing polyketide synthase spyA (1834 aa).

Positions 91 to 255 (LAPLTVIIHL…TRIPIYGRYH (165 aa)) constitute a Starter acyltransferase (SAT) domain. The Ketosynthase family 3 (KS3) domain maps to 385 to 801 (EHSIAVIGAA…GNNTAVIVCE (417 aa)). Residues C551, H687, and H724 each act as for beta-ketoacyl synthase activity in the active site. The 246-residue stretch at 919 to 1164 (YEGSSLLRSH…KELGPCTWVE (246 aa)) folds into the Malonyl-CoA:ACP transacylase (MAT) domain. The segment at 1269–1398 (PLVYLLRDEG…GVISLRQERH (130 aa)) is N-terminal hotdog fold. The region spanning 1269–1577 (PLVYLLRDEG…FVRITASSLN (309 aa)) is the PKS/mFAS DH domain. Residues 1269–1577 (PLVYLLRDEG…FVRITASSLN (309 aa)) are product template (PT) domain. Positions 1428–1577 (AISLKEGIIY…FVRITASSLN (150 aa)) are C-terminal hotdog fold. One can recognise a Carrier 1 domain in the interval 1616-1690 (SDILSILSHL…TLCQEIQTQR (75 aa)). The residue at position 1650 (S1650) is an O-(pantetheine 4'-phosphoryl)serine. The disordered stretch occupies residues 1693 to 1720 (RLARASRTTTATRNTSFSLGRRTSSTES). A compositionally biased stretch (low complexity) spans 1697–1710 (ASRTTTATRNTSFS). The region spanning 1731–1807 (SKSAAVLAQL…GLARLILASE (77 aa)) is the Carrier 2 domain. An O-(pantetheine 4'-phosphoryl)serine modification is found at S1767.

Requires pantetheine 4'-phosphate as cofactor.

It catalyses the reaction 2 malonyl-CoA + acetyl-CoA + 2 H(+) = triacetate lactone + 2 CO2 + 3 CoA. Its pathway is secondary metabolite biosynthesis; terpenoid biosynthesis. In terms of biological role, non-reducing polyketide synthase; part of the gene cluster that mediates the biosynthesis of meroterpenoids called sartorypyrones. The biosynthesis of sartorypyrones begins with the production of triacetic acid lactone (TAL) by the NR-PKS spyA using one molecule of acetyl-CoA and two molecules of malonyl-CoA. As spyA lacks a thioesterase (TE) domain, TAL is likely generated through self-release from spyA by spontaneous lactonization. After production of TAL, the prenyltransferase spyF then conjugates geranylgeranyl pyrophosphate (GGPP) to TAL to form geranylgeranyl-triacetate lactone, for which the pathway-specific geranylgeranyl pyrophosphate synthase (GGPS) spyE is required to provide GGPP. Subsequently, geranylgeranyl-triacetate lactone is epoxidized at the terminal olein by the FAD-dependent monooxygenase spyC, followed by cyclization of the terpenoid component catalyzed by the terpene cyclase spyD to produce both the bicyclic sartorypyrone F and the monocyclic sartorypyrone D. Finally, the last step of the biosynthesis involves the acetylation of the meroterpenoids sartorypyrones D and F by the acetyltransferase SpyB to produce sartorypyrones A and G, respectively. This chain is Non-reducing polyketide synthase spyA, found in Aspergillus fumigatus (strain ATCC MYA-4609 / CBS 101355 / FGSC A1100 / Af293) (Neosartorya fumigata).